Consider the following 1013-residue polypeptide: Nucleotide-binding oligomerization domain-containing protein 2 (1013 aa).

CARD domains follow at residues 1–82 and 107–178; these read MCSQ…AVQE and LQSH…HVQK. An ATG16L1-binding motif motif is present at residues 36–50; that stretch reads WEVLSWEDYEGLRLV. Residues threonine 212, tyrosine 225, threonine 226, glycine 275, serine 276, glycine 277, lysine 278, serine 279, and threonine 280 each contribute to the ADP site. The tract at residues 214-247 is required for CARD9 binding; it reads DGAENLCLEDIYTENTLEVRTEVGMAGPLHKSPA. One can recognise an NACHT domain in the interval 266–402; that stretch reads DTVLVVGEAG…RKVLTSRPDA (137 aa). 272–279 lines the ATP pocket; the sequence is GEAGSGKS. Cysteine 368 carries the S-palmitoyl cysteine lipid modification. ADP is bound at residue histidine 576. LRR repeat units lie at residues 764-785, 789-812, 817-838, 845-857, 873-893, 901-922, 929-949, 957-978, and 985-1005; these read RPVALQLDHNSVGDIGVEQLLP, ACKALYLRDNNISDRGICKLIEHA, QLQKLALFNNKLTDGCAHSVAQ, NFLALRLGNNHIT, SLQFLGFWGNKVGDKGAQALA, SLKWLSLVGNNIGSVGAQALAS, ALEELCLEENHLQDAGVCSLA, SLKVLKLSNNCITFVGAEALLQ, and TILEVWLRGNPFSPEEMEALS.

Belongs to the NOD1-NOD2 family. In terms of assembly, homooligomer: homooligomerizes following muramyl dipeptide (MDP)-binding, promoting RIPK2 recruitment. Interacts (via CARD domain) with RIPK2 (via CARD domain). Following RIPK2 recruitment, RIPK2 homooligomerizes via its CARD domain and forms long filaments named RIPosomes. Interacts (via CARD domain) with ubiquitin; inhibiting interaction with RIPK2. Component of a signaling complex consisting of ARHGEF2, NOD2 and RIPK2. Interacts with ANKRD17 (via N-terminus). Interacts with HSPA1A; the interaction enhances NOD2 stability. Interacts (via both CARD domains) with HSP90; the interaction enhances NOD2 stability. Interacts (via CARD domain) with SOCS3; the interaction promotes NOD2 degradation. Interacts (via CARD domain) with ERBIN; the interaction inhibits activation of NOD2. Interacts with MAPKBP1; the interaction is enhanced in the presence of muramyl dipeptide (MDP) and inhibits NOD2 homooligomerization and activation. Interacts with INAVA; the interaction takes place upon Pattern recognition receptor (PRR) stimulation. Interacts (via NACHT domain) with CARD9. Interacts (via CARD domain) with CASP1; this interaction leads to IL1B processing. Also interacts with CASP4. Interacts with NLRP1; this interaction is enhanced in the presence of muramyl dipeptide (MDP) and leads to increased IL1B release. Interacts with NLRP12; this interaction promotes degradation of NOD2 through the ubiquitin-proteasome pathway. Interacts with ANKHD1, C10orf67, CHMP5, DOCK7, ENTR1, KRT15, LDOC1, PPP1R12C, PPP2R3B, TRIM41 and VIM. Interacts with MAVS; interaction takes place following single-stranded RNA (ssRNA)-binding. Interacts with ATG16L1. Interacts with IRGM; promoting IRGM 'Lys-63'-linked polyubiquitination, which is required for interactions with the core autophagy factors. Palmitoylated by ZDHHC5; palmitoylation is required for proper recruitment to the bacterial entry site and hence for proper signaling upon cognate peptidoglycan detection. Palmitoylation promotes localization to the cell membrane. Palmitoylation protects from SQSTM1/p62-dependent autophagic degradation. Post-translationally, polyubiquitinated by TRIM27, leading to proteasome-mediated degradation. Polyubiquitinated and degraded following muramyl dipeptide (MDP) stimulation, conferring MDP tolerance and preventing septic shock. In terms of processing, degraded via selective autophagy following interaction with IRGM. IRGM promotes NOD2-RIPK2 RIPosome recruitment to autophagosome membranes, promoting their SQSTM1/p62-dependent autophagic degradation. O-glycosylated by OGT, O-GlcNAcylation increases protein stability.

It is found in the cell membrane. The protein resides in the basolateral cell membrane. The protein localises to the cytoplasm. It localises to the mitochondrion. With respect to regulation, ADP-binding promotes an inactive closed conformation. Its function is as follows. Pattern recognition receptor (PRR) that detects bacterial peptidoglycan fragments and other danger signals and plays an important role in gastrointestinal immunity. Specifically activated by muramyl dipeptide (MDP), a fragment of bacterial peptidoglycan found in every bacterial peptidoglycan type. NOD2 specifically recognizes and binds 6-O-phospho-MDP, the phosphorylated form of MDP, which is generated by NAGK. 6-O-phospho-MDP-binding triggers oligomerization that facilitates the binding and subsequent activation of the proximal adapter receptor-interacting RIPK2. Following recruitment, RIPK2 undergoes 'Met-1'- (linear) and 'Lys-63'-linked polyubiquitination by E3 ubiquitin-protein ligases XIAP, BIRC2, BIRC3 and the LUBAC complex, becoming a scaffolding protein for downstream effectors, triggering activation of the NF-kappa-B and MAP kinases signaling. This in turn leads to the transcriptional activation of hundreds of genes involved in immune response. Its ability to detect bacterial MDP plays a central role in maintaining the equilibrium between intestinal microbiota and host immune responses to control inflammation. An imbalance in this relationship results in dysbiosis, whereby pathogenic bacteria prevail on commensals, causing damage in the intestinal epithelial barrier as well as allowing bacterial invasion and inflammation. Acts as a regulator of appetite by sensing MDP in a subset of brain neurons: microbiota-derived MDP reach the brain, where they bind and activate NOD2 in inhibitory hypothalamic neurons, decreasing neuronal activity, thereby regulating satiety and body temperature. NOD2-dependent MDP-sensing of bacterial cell walls in the intestinal epithelial compartment contributes to sustained postnatal growth upon undernutrition. Also plays a role in antiviral response by acting as a sensor of single-stranded RNA (ssRNA) from viruses: upon ssRNA-binding, interacts with MAVS, leading to activation of interferon regulatory factor-3/IRF3 and expression of type I interferon. Also acts as a regulator of autophagy in dendritic cells via its interaction with ATG16L1, possibly by recruiting ATG16L1 at the site of bacterial entry. NOD2 activation in the small intestine crypt also contributes to intestinal stem cells survival and function: acts by promoting mitophagy via its association with ATG16L1. In addition to its main role in innate immunity, also regulates the adaptive immune system by acting as regulator of helper T-cell and regulatory T-cells (Tregs). Besides recognizing pathogens, also involved in the endoplasmic reticulum stress response: acts by sensing and binding to the cytosolic metabolite sphingosine-1-phosphate generated in response to endoplasmic reticulum stress, initiating an inflammation process that leads to activation of the NF-kappa-B and MAP kinases signaling. May also be involved in NLRP1 activation following activation by MDP, leading to CASP1 activation and IL1B release in macrophages. The polypeptide is Nucleotide-binding oligomerization domain-containing protein 2 (Oryctolagus cuniculus (Rabbit)).